We begin with the raw amino-acid sequence, 381 residues long: Actin-binding Rho-activating protein (381 aa).

2 disordered regions span residues 39–156 and 179–207; these read ENSI…SHGS and QEEP…PEQD. Residues 69 to 79 are compositionally biased toward polar residues; it reads PTSHQKAQSAP. Positions 97-110 are enriched in basic and acidic residues; that stretch reads KAPEVSHIKKKEVS. Residues Ser156 and Ser188 each carry the phosphoserine modification. The segment covering 179–188 has biased composition (basic and acidic residues); sequence QEEPTWRSDS. 2 actin-binding regions span residues 199–299 and 300–381; these read EAEE…AERA and KRAE…TLLK. Interaction with actin stretches follow at residues 240 to 285 and 352 to 381; these read SPVG…GDEG and MRAR…TLLK.

In terms of assembly, binds F-actin and ABLIM1, ABLIM2 and ABLIM3. Interaction with ABLIM2 and ABLIM3 enhances activity.

It is found in the cytoplasm. The protein localises to the myofibril. It localises to the sarcomere. Its subcellular location is the cytoskeleton. Functionally, acts as an activator of serum response factor (SRF)-dependent transcription possibly by inducing nuclear translocation of MKL1 or MKL2 and through a mechanism requiring Rho-actin signaling. This is Actin-binding Rho-activating protein from Homo sapiens (Human).